Consider the following 470-residue polypeptide: Origin of replication complex subunit 4 (470 aa).

63 to 70 (GPRGCGKA) lines the ATP pocket.

It belongs to the ORC4 family. As to quaternary structure, component of the origin recognition complex (ORC) composed of at least ORC1, ORC2, ORC3, ORC4, ORC5 and ORC6. ORC is regulated in a cell-cycle and development dependent manner. It is sequentially assembled at the exit from anaphase of mitosis and disassembled as cells enter S phase. In terms of tissue distribution, expressed in the shoot apical meristem (SAM), leaves, ears and roots (including root tips).

It is found in the nucleus. Component of the origin recognition complex (ORC) that binds origins of replication. DNA-binding is ATP-dependent. The specific DNA sequences that define origins of replication have not been identified yet. ORC is required to assemble the pre-replication complex necessary to initiate DNA replication. The chain is Origin of replication complex subunit 4 from Oryza sativa subsp. japonica (Rice).